A 346-amino-acid chain; its full sequence is Methylthioribose-1-phosphate isomerase (346 aa).

Substrate is bound by residues 48–50, Arg91, and Gln196; that span reads RGA. Asp237 serves as the catalytic Proton donor. 247–248 is a substrate binding site; it reads NK.

It belongs to the eIF-2B alpha/beta/delta subunits family. MtnA subfamily.

The catalysed reaction is 5-(methylsulfanyl)-alpha-D-ribose 1-phosphate = 5-(methylsulfanyl)-D-ribulose 1-phosphate. It participates in amino-acid biosynthesis; L-methionine biosynthesis via salvage pathway; L-methionine from S-methyl-5-thio-alpha-D-ribose 1-phosphate: step 1/6. Catalyzes the interconversion of methylthioribose-1-phosphate (MTR-1-P) into methylthioribulose-1-phosphate (MTRu-1-P). This is Methylthioribose-1-phosphate isomerase from Thermosipho melanesiensis (strain DSM 12029 / CIP 104789 / BI429).